We begin with the raw amino-acid sequence, 450 residues long: Serine/threonine-protein kinase-transforming protein Rmil (450 aa).

Basic and acidic residues-rich tracts occupy residues 1–14 (MEAVIKDLIRDQGV) and 49–73 (QRERKSSSSSEDRNRMKTLGRRDSS). A disordered region spans residues 1–80 (MEAVIKDLIR…DSSDDWEIPD (80 aa)). The 261-residue stretch at 83–343 (ITVGQRIGSG…PQILASIELL (261 aa)) folds into the Protein kinase domain. ATP-binding positions include 89 to 97 (IGSGSFGTV) and lysine 109. The Proton acceptor role is filled by aspartate 202.

The protein belongs to the protein kinase superfamily. TKL Ser/Thr protein kinase family. RAF subfamily.

It catalyses the reaction L-seryl-[protein] + ATP = O-phospho-L-seryl-[protein] + ADP + H(+). It carries out the reaction L-threonyl-[protein] + ATP = O-phospho-L-threonyl-[protein] + ADP + H(+). The polypeptide is Serine/threonine-protein kinase-transforming protein Rmil (V-RMIL) (Avian rous-associated virus type 1).